The chain runs to 325 residues: MSHSLRVVFAGTPDFAAASLLALLDSRHQVVAAYTQPDRPAGRGRKLTPSPVKALAQEHGLPVHQPTSLKDTDAQQTLAALEADVLVVVAYGLILPQAVLDIPRLGCLNVHASLLPRWRGAAPIQRAIEAGDTRSGVTIMQMDAGLDTGAMLLVRETPITATTTGGELHDRLAPLGGEAIVEALDALATDGLTATPQPSEGVTYAAKLSKAEAELDFTRPAHELAARVRAFNPWPVAWTRLAGEPLRLWLAEAEAEAERPGVAPGTLLQSAPDALRIACGHDGTQVVRITRAQLPGGKPLAVRDLLNARGERFPEGLRLGQEDRA.

A (6S)-5,6,7,8-tetrahydrofolate-binding site is contributed by 113–116 (SLLP).

This sequence belongs to the Fmt family.

It catalyses the reaction L-methionyl-tRNA(fMet) + (6R)-10-formyltetrahydrofolate = N-formyl-L-methionyl-tRNA(fMet) + (6S)-5,6,7,8-tetrahydrofolate + H(+). Functionally, attaches a formyl group to the free amino group of methionyl-tRNA(fMet). The formyl group appears to play a dual role in the initiator identity of N-formylmethionyl-tRNA by promoting its recognition by IF2 and preventing the misappropriation of this tRNA by the elongation apparatus. The sequence is that of Methionyl-tRNA formyltransferase from Chromohalobacter salexigens (strain ATCC BAA-138 / DSM 3043 / CIP 106854 / NCIMB 13768 / 1H11).